The chain runs to 229 residues: Growth factor receptor-bound protein 2-A (229 aa).

One can recognise an SH3 1 domain in the interval 1 to 58; it reads MEAIAKYDFKATADDELSFKRGDVLKVLNEECDQNWYKAELNGKDGFIPKNYIEMKAH. An SH2 domain is found at 60-152; it reads WFFGKIPRAK…NQQIFLRDIE (93 aa). The SH3 2 domain occupies 168-227; sequence QQPTYVQALFDFDPQEDGELGFRRGDFIQVVDNSDPNWWKGTCLSQTGMFPRNYVTPVNR.

This sequence belongs to the GRB2/sem-5/DRK family.

Its subcellular location is the nucleus. It localises to the cytoplasm. The protein localises to the endosome. It is found in the golgi apparatus. Functionally, adapter protein that provides a critical link between cell surface growth factor receptors and the Ras signaling pathway. Promotes meiotic reinitiation during oocyte maturation. The chain is Growth factor receptor-bound protein 2-A (grb2-a) from Xenopus laevis (African clawed frog).